Reading from the N-terminus, the 137-residue chain is Large ribosomal subunit protein uL16 (137 aa).

It belongs to the universal ribosomal protein uL16 family. As to quaternary structure, part of the 50S ribosomal subunit.

In terms of biological role, binds 23S rRNA and is also seen to make contacts with the A and possibly P site tRNAs. This chain is Large ribosomal subunit protein uL16, found in Methylococcus capsulatus (strain ATCC 33009 / NCIMB 11132 / Bath).